A 690-amino-acid chain; its full sequence is Ras guanyl-releasing protein 3 (690 aa).

An N-terminal Ras-GEF domain is found at 3–125; sequence SSGLGKAATL…SLIDISSIPS (123 aa). One can recognise a Ras-GEF domain in the interval 152–383; that stretch reads EPIELAEHLT…YKLSLVLEPR (232 aa). EF-hand domains are found at residues 420-455 and 458-484; these read HIRK…FPFL and FCVL…AKSQ. Residues Asp-433, Asp-435, Asp-437, Tyr-439, Asp-444, Asp-462, Asp-464, Asp-466, and Glu-473 each coordinate Ca(2+). Residues 494 to 544 form a Phorbol-ester/DAG-type zinc finger; sequence IHNFQEMTYLKPTFCEHCAGFLWGIIKQGYKCKDCGANCHKQCKDLLVLAC. A disordered region spans residues 667–690; it reads VDRGTEFELDQDEGEETRQDGEDG.

Belongs to the RASGRP family.

Its function is as follows. Guanine nucleotide exchange factor (GEF) for Ras and Rap1. The chain is Ras guanyl-releasing protein 3 (RASGRP3) from Homo sapiens (Human).